The following is a 133-amino-acid chain: Ribonuclease VapC10 (133 aa).

In terms of domain architecture, PINc spans 2–119; it reads ILVDSDVLIA…NVWHFPMFEQ (118 aa). Mg(2+) contacts are provided by D5 and D92.

The protein belongs to the PINc/VapC protein family. Requires Mg(2+) as cofactor.

In terms of biological role, toxic component of a type II toxin-antitoxin (TA) system. An RNase. The cognate antitoxin is VapB10. The polypeptide is Ribonuclease VapC10 (Mycobacterium tuberculosis (strain CDC 1551 / Oshkosh)).